The sequence spans 923 residues: MNRRDFIKNTAIASAASVAGLSVPSSMLGAQEDWKWDKAVCRFCGTGCGIMIARKDGKIVATKGDPAAPVNRGLNCIKGYFNAKIMYGEDRLVMPLLRMNEKGEFDKKGKFQQVSWQRAFDEMEKQFKKAYNELGVTGIGIFGSGQYTIQEGYAALKLAKAGFRTNNIDPNARHCMASAVVGFMQTFGVDEPSGCYDDIELTDTIITWGANMAEMHPILWSRVSDRKLSNLDKVKVVNLSTFSNRTSNIADIEIIFKPNTDLAIWNYIAREIVYNHPEAMDMKFIKDHCVFATGYADIGYGMRNNPNHPKFKESEKDTVEKENVITLDDEEAASLSYLGVKAGDKFEMKHQGVADKNWEISFEEFKKGLAPYTLEYTAKVAKGDDNESLEDFKKKLQELANLYIEKNRKVVSFWTMGFNQHTRGSWVNEQAYMVHFLLGKQAKPGSGAFSLTGQPSACGTAREVGTFSHRLPADMVVANPKHREISEKIWKVPAKTINPKPGSPYLNIMRDLEDGKIKFAWVQVNNPWQNTANANHWIAAAREMDNFIVVSDCYPGISAKVADLILPSAMIYEKWGAYGNAERRTQHWKQQVLPVGAAMSDTWQILEFAKRFKLKEVWKEQKVDNKLTLPSVLEEAKAMGYSEDDTLFDVLFANKEAKSFNPNDAIAKGFDNTDVKGDERKIQGSDGKEFTGYGFFVQKYLWEEYRKFGLGHGHDLADFDTYHKVRGLRWPVVNGKETQWRFNTKFDYYAKKAAPNSDFAFYGDFNKMLTNGDLIAPKDEKEHSIKNKAKIFFRPFMKAPERPSKEYPFWLATGRVLEHWHSGTMTMRVPELYRAVPEALCYMSEKDGEKLGLNQGDLVWVESRRGKVKARVDMRGRNKPPVGLVYVPWFDENVYINKVTLDATCPLSKQTDFKKCAVKIYKA.

Residues 1 to 30 constitute a signal peptide (tat-type signal); it reads MNRRDFIKNTAIASAASVAGLSVPSSMLGA. Residues 34 to 90 form the 4Fe-4S Mo/W bis-MGD-type domain; sequence WKWDKAVCRFCGTGCGIMIARKDGKIVATKGDPAAPVNRGLNCIKGYFNAKIMYGED. Cys41, Cys44, Cys48, and Cys76 together coordinate [4Fe-4S] cluster. Mo-bis(molybdopterin guanine dinucleotide) contacts are provided by residues Lys78, Gln146, Asn171, Cys175, 208–215, Met416, Gln420, Asn526, 551–552, Lys574, Asp601, and 813–822; these read WGANMAEM, SD, and TGRVLEHWHS. Substrate is bound at residue Trp889. Positions 897 and 914 each coordinate Mo-bis(molybdopterin guanine dinucleotide).

This sequence belongs to the prokaryotic molybdopterin-containing oxidoreductase family. NasA/NapA/NarB subfamily. Component of the periplasmic nitrate reductase NapAB complex composed of NapA and NapB. [4Fe-4S] cluster is required as a cofactor. Mo-bis(molybdopterin guanine dinucleotide) serves as cofactor. Post-translationally, predicted to be exported by the Tat system. The position of the signal peptide cleavage has not been experimentally proven.

It localises to the periplasm. The catalysed reaction is 2 Fe(II)-[cytochrome] + nitrate + 2 H(+) = 2 Fe(III)-[cytochrome] + nitrite + H2O. Functionally, catalytic subunit of the periplasmic nitrate reductase complex NapAB. Receives electrons from NapB and catalyzes the reduction of nitrate to nitrite. This Campylobacter jejuni subsp. jejuni serotype O:23/36 (strain 81-176) protein is Periplasmic nitrate reductase.